A 352-amino-acid chain; its full sequence is Histidine biosynthesis bifunctional protein HisB (352 aa).

The histidinol-phosphatase stretch occupies residues 1–164 (MSQKILFIDR…EIENEILSSF (164 aa)). Residue Asp-9 is the Nucleophile of the active site. Asp-9 and Asp-11 together coordinate Mg(2+). Catalysis depends on Asp-11, which acts as the Proton donor. Cys-93, His-95, Cys-101, and Cys-103 together coordinate Zn(2+). Residue Asp-130 coordinates Mg(2+). An imidazoleglycerol-phosphate dehydratase region spans residues 165 to 352 (RSASYQRTTK…ENLASSKGVI (188 aa)).

The protein in the N-terminal section; belongs to the histidinol-phosphatase family. It in the C-terminal section; belongs to the imidazoleglycerol-phosphate dehydratase family. Mg(2+) is required as a cofactor. Zn(2+) serves as cofactor.

The protein localises to the cytoplasm. It carries out the reaction D-erythro-1-(imidazol-4-yl)glycerol 3-phosphate = 3-(imidazol-4-yl)-2-oxopropyl phosphate + H2O. The enzyme catalyses L-histidinol phosphate + H2O = L-histidinol + phosphate. Its pathway is amino-acid biosynthesis; L-histidine biosynthesis; L-histidine from 5-phospho-alpha-D-ribose 1-diphosphate: step 6/9. The protein operates within amino-acid biosynthesis; L-histidine biosynthesis; L-histidine from 5-phospho-alpha-D-ribose 1-diphosphate: step 8/9. The chain is Histidine biosynthesis bifunctional protein HisB from Campylobacter jejuni subsp. jejuni serotype O:23/36 (strain 81-176).